The primary structure comprises 215 residues: Cytochrome b6 (215 aa).

A helical transmembrane segment spans residues 32 to 52 (IFYCLGGITLTCFLVQVATGF). Cys35 contacts heme c. Heme b-binding residues include His86 and His100. 3 helical membrane passes run 90–110 (ASMMVLMMILHVFRVYLTGGF), 116–136 (LTWVTGVILAVLTASFGVTGY), and 186–206 (LHTFVLPLLTAVFMLMHFPMI). Residues His187 and His202 each contribute to the heme b site.

Belongs to the cytochrome b family. PetB subfamily. As to quaternary structure, the 4 large subunits of the cytochrome b6-f complex are cytochrome b6, subunit IV (17 kDa polypeptide, PetD), cytochrome f and the Rieske protein, while the 4 small subunits are PetG, PetL, PetM and PetN. The complex functions as a dimer. Requires heme b as cofactor. Heme c serves as cofactor.

The protein resides in the plastid. The protein localises to the chloroplast thylakoid membrane. Functionally, component of the cytochrome b6-f complex, which mediates electron transfer between photosystem II (PSII) and photosystem I (PSI), cyclic electron flow around PSI, and state transitions. This Liriodendron tulipifera (Tuliptree) protein is Cytochrome b6.